Reading from the N-terminus, the 85-residue chain is Large ribosomal subunit protein bL27 (85 aa).

A disordered region spans residues 1–20 (MAHKKAGGSTRNGRDSEAKR).

Belongs to the bacterial ribosomal protein bL27 family.

This is Large ribosomal subunit protein bL27 from Klebsiella pneumoniae (strain 342).